The chain runs to 397 residues: Formate-dependent phosphoribosylglycinamide formyltransferase (397 aa).

N(1)-(5-phospho-beta-D-ribosyl)glycinamide contacts are provided by residues 21-22 (EL) and E81. Residues R113, K154, 194–197 (EEYV), and E202 each bind ATP. One can recognise an ATP-grasp domain in the interval 118–313 (KLAAEKVKVP…EFQIHVRSAL (196 aa)). Residues E272 and E284 each contribute to the Mg(2+) site. N(1)-(5-phospho-beta-D-ribosyl)glycinamide contacts are provided by residues D291, K361, and 368 to 369 (RR).

Belongs to the PurK/PurT family. Homodimer.

It catalyses the reaction N(1)-(5-phospho-beta-D-ribosyl)glycinamide + formate + ATP = N(2)-formyl-N(1)-(5-phospho-beta-D-ribosyl)glycinamide + ADP + phosphate + H(+). It functions in the pathway purine metabolism; IMP biosynthesis via de novo pathway; N(2)-formyl-N(1)-(5-phospho-D-ribosyl)glycinamide from N(1)-(5-phospho-D-ribosyl)glycinamide (formate route): step 1/1. Functionally, involved in the de novo purine biosynthesis. Catalyzes the transfer of formate to 5-phospho-ribosyl-glycinamide (GAR), producing 5-phospho-ribosyl-N-formylglycinamide (FGAR). Formate is provided by PurU via hydrolysis of 10-formyl-tetrahydrofolate. The polypeptide is Formate-dependent phosphoribosylglycinamide formyltransferase (Sulfurisphaera tokodaii (strain DSM 16993 / JCM 10545 / NBRC 100140 / 7) (Sulfolobus tokodaii)).